The primary structure comprises 193 residues: Superoxide dismutase [Fe] (193 aa).

4 residues coordinate Fe cation: His-27, His-74, Asp-157, and His-161.

This sequence belongs to the iron/manganese superoxide dismutase family. As to quaternary structure, monomer. Fe cation serves as cofactor.

The catalysed reaction is 2 superoxide + 2 H(+) = H2O2 + O2. Its function is as follows. Destroys superoxide anion radicals which are normally produced within the cells and which are toxic to biological systems. Involved in the metabolism of 4-aminophenol. May have an indirect role in hydroxyquinol metabolism by scavenging and detoxifying reactive species that promote its auto-oxidation. This Burkholderia sp protein is Superoxide dismutase [Fe].